The primary structure comprises 77 residues: Large ribosomal subunit protein eL14 (77 aa).

Belongs to the eukaryotic ribosomal protein eL14 family.

This Methanococcus vannielii (strain ATCC 35089 / DSM 1224 / JCM 13029 / OCM 148 / SB) protein is Large ribosomal subunit protein eL14.